The following is a 467-amino-acid chain: Glutamate--tRNA ligase (467 aa).

Positions 9–19 match the 'HIGH' region motif; the sequence is PSPTGYLHIGG. Positions 237–241 match the 'KMSKS' region motif; that stretch reads KLSKR. Lys-240 serves as a coordination point for ATP.

Belongs to the class-I aminoacyl-tRNA synthetase family. Glutamate--tRNA ligase type 1 subfamily. As to quaternary structure, monomer.

Its subcellular location is the cytoplasm. The enzyme catalyses tRNA(Glu) + L-glutamate + ATP = L-glutamyl-tRNA(Glu) + AMP + diphosphate. In terms of biological role, catalyzes the attachment of glutamate to tRNA(Glu) in a two-step reaction: glutamate is first activated by ATP to form Glu-AMP and then transferred to the acceptor end of tRNA(Glu). This chain is Glutamate--tRNA ligase, found in Xanthomonas campestris pv. campestris (strain 8004).